A 688-amino-acid polypeptide reads, in one-letter code: MSERKIPKEVIEEVERLREEIEYHNYRYYVLNDPVITDEEYDKLMRRLIELERMYPELVTPDSPTQRVGGKVLEGFKTVKHSVPMLSLDNTYNEEEILEFDRRVKKTLQEAEVEYVAELKIDGVSIALRYENGKFVLGATRGDGIEGEDVSENVKTVRSIPLRLRKPVTVEVRGEIYMPVDEFKRLNDEREEEGLPPFANPRNAAAGTLRQLNTALVAARRLDSFIYYVVHPENYGLKTQWEALQFLKELGFKVNPHSKLCKNIQEVIDYWREWEERKKELDYWVDGVVVKVNRFDFQRILGETSKAPRWAIAFKFPAEQARTRVLDVTIQVGRTGVLTPVAELEPVQLAGTIVKRASLHNFEYIREKDIRIGDYVFVEKAGGIIPQIVKSIPELRTGSEKEIKPPDKCPVCGGKVGKLDPEEVALRCLNPHCPAKLKRALRTLVSREALDIEGLGEKLIDRLVDAGLVKDIADIFYLTPFDLAQLGPGIGQRTIAKILQEIEEAKKRPLHKLITGLGIPMVGQKTAKILAEHFKSLEAIADASYETLKDIPGIGPEIAKSIVEYFRNPKTREIIEKLKKAGVKLEERVMKLDILKGLTFAVTGTLKNFTREEIVEFFEKLGAKVVNSVSRNTDYLIVGENPGSKYEKAKMLKVKTMSEEEFLEFVRKRAELKGYNFDEIMRSWKEWS.

Residues 38–42 (DEEYD), 87–88 (SL), and Glu-118 contribute to the NAD(+) site. The active-site N6-AMP-lysine intermediate is Lys-120. NAD(+) is bound by residues Arg-141, Glu-175, Lys-291, and Lys-315. Zn(2+) is bound by residues Cys-409, Cys-412, Cys-428, and Cys-433. The BRCT domain occupies 590 to 679 (MKLDILKGLT…AELKGYNFDE (90 aa)).

Belongs to the NAD-dependent DNA ligase family. LigA subfamily. Requires Mg(2+) as cofactor. The cofactor is Mn(2+).

The enzyme catalyses NAD(+) + (deoxyribonucleotide)n-3'-hydroxyl + 5'-phospho-(deoxyribonucleotide)m = (deoxyribonucleotide)n+m + AMP + beta-nicotinamide D-nucleotide.. In terms of biological role, DNA ligase that catalyzes the formation of phosphodiester linkages between 5'-phosphoryl and 3'-hydroxyl groups in double-stranded DNA using NAD as a coenzyme and as the energy source for the reaction. It is essential for DNA replication and repair of damaged DNA. The sequence is that of DNA ligase from Thermotoga petrophila (strain ATCC BAA-488 / DSM 13995 / JCM 10881 / RKU-1).